The sequence spans 192 residues: Large ribosomal subunit protein bL25 (192 aa).

It belongs to the bacterial ribosomal protein bL25 family. CTC subfamily. In terms of assembly, part of the 50S ribosomal subunit; part of the 5S rRNA/L5/L18/L25 subcomplex. Contacts the 5S rRNA. Binds to the 5S rRNA independently of L5 and L18.

Functionally, this is one of the proteins that binds to the 5S RNA in the ribosome where it forms part of the central protuberance. The polypeptide is Large ribosomal subunit protein bL25 (Cytophaga hutchinsonii (strain ATCC 33406 / DSM 1761 / CIP 103989 / NBRC 15051 / NCIMB 9469 / D465)).